The sequence spans 198 residues: UPF0312 protein PFL_5802 (198 aa).

A signal peptide spans 1-23 (MLKKTLAALAIGSAVLAAGQVMA).

The protein belongs to the UPF0312 family. Type 1 subfamily.

The protein resides in the periplasm. The chain is UPF0312 protein PFL_5802 from Pseudomonas fluorescens (strain ATCC BAA-477 / NRRL B-23932 / Pf-5).